The chain runs to 287 residues: Probable phosphite transport system-binding protein PtxB (287 aa).

The signal sequence occupies residues 1–23 (MKRLSALLLTCLLSAVSSLSALA).

The protein belongs to the phosphate/phosphite/phosphonate binding protein family.

Functionally, probably forms part of a binding-protein-dependent phosphite transporter. Required for oxidation of phosphite to phosphate. The chain is Probable phosphite transport system-binding protein PtxB (ptxB) from Stutzerimonas stutzeri (Pseudomonas stutzeri).